The following is a 564-amino-acid chain: Poly(U)-binding-splicing factor PUF60 (564 aa).

An inhibits homodimerization region spans residues 1-521; the sequence is MATATIALQV…EDAEIIVKIF (521 aa). A disordered region spans residues 37-61; that stretch reads KWKPPQGTESIKMENGQSTGTKLGL. A Glycyl lysine isopeptide (Lys-Gly) (interchain with G-Cter in SUMO2) cross-link involves residue Lys48. Thr65 is modified (phosphothreonine). Residues 82-564 form an inhibits transcriptional repression, interaction with ERCC3 and apoptosis induction region; the sequence is QSIKSVLVKQ…ERFDNSDLSA (483 aa). Lys85 is covalently cross-linked (Glycyl lysine isopeptide (Lys-Gly) (interchain with G-Cter in SUMO2)). At Ser117 the chain carries Phosphoserine. RRM domains lie at 134-212 and 231-309; these read CRVY…RPSN and NRIY…KAVT. Ser249 carries the phosphoserine modification. Lys256 carries the post-translational modification N6-acetyllysine. Phosphothreonine is present on Thr319. The disordered stretch occupies residues 421–442; the sequence is KKEKEEEELFPESERPEMLSEQ. Lys424 is covalently cross-linked (Glycyl lysine isopeptide (Lys-Gly) (interchain with G-Cter in SUMO2)). The segment covering 432 to 442 has biased composition (basic and acidic residues); the sequence is ESERPEMLSEQ. Lys459 is subject to N6-acetyllysine. A Glycyl lysine isopeptide (Lys-Gly) (interchain with G-Cter in SUMO2) cross-link involves residue Lys463. An RRM 3; atypical domain is found at 467-554; that stretch reads TVMVLRNMVD…RKVVAEVYDQ (88 aa).

The protein belongs to the RRM half pint family. In terms of assembly, homodimer. Associates with the spliceosome. Found in a complex with RO60 and Y5 RNA. Found in a complex with FUBP1 and far upstream element (FUSE) DNA segment. Interacts directly with ERCC3. Interacts with CDK7 and GTF2H1. Interacts with SRSF11/P54. Interacts with ARGLU1; interaction may be involved in ARGLU1-mediated modulation of alternative splicing.

The protein resides in the nucleus. Functionally, DNA- and RNA-binding protein, involved in several nuclear processes such as pre-mRNA splicing, apoptosis and transcription regulation. In association with FUBP1 regulates MYC transcription at the P2 promoter through the core-TFIIH basal transcription factor. Acts as a transcriptional repressor through the core-TFIIH basal transcription factor. Represses FUBP1-induced transcriptional activation but not basal transcription. Decreases ERCC3 helicase activity. Is also involved in pre-mRNA splicing. Promotes splicing of an intron with weak 3'-splice site and pyrimidine tract in a cooperative manner with U2AF2. Involved in apoptosis induction when overexpressed in HeLa cells. Modulates alternative splicing of several mRNAs. Binds to relaxed DNA of active promoter regions. Binds to the pyrimidine tract and 3'-splice site regions of pre-mRNA; binding is enhanced in presence of U2AF2. Binds to Y5 RNA in association with RO60. Binds to poly(U) RNA. The polypeptide is Poly(U)-binding-splicing factor PUF60 (Rattus norvegicus (Rat)).